Reading from the N-terminus, the 324-residue chain is Serine/threonine-protein phosphatase PP1 isozyme 8 (324 aa).

Positions 66, 68, 94, and 126 each coordinate Mn(2+). His127 (proton donor) is an active-site residue. 2 residues coordinate Mn(2+): His175 and His250.

The protein belongs to the PPP phosphatase family. PP-1 subfamily. Mn(2+) is required as a cofactor. As to expression, expressed in roots, rosettes and flowers.

The protein localises to the nucleus. It is found in the cytoplasm. It carries out the reaction O-phospho-L-seryl-[protein] + H2O = L-seryl-[protein] + phosphate. The catalysed reaction is O-phospho-L-threonyl-[protein] + H2O = L-threonyl-[protein] + phosphate. Phosphatase activity is strongly reduced by the protein phosphatase inhibitor 2 (I-2). Functionally, serine/threonine-protein phosphatase that possesses phosphatase activity toward para-nitrophenyl phosphate (pNPP) in vitro. The chain is Serine/threonine-protein phosphatase PP1 isozyme 8 from Arabidopsis thaliana (Mouse-ear cress).